Consider the following 295-residue polypeptide: G1/S-specific cyclin-D1 (295 aa).

Positions 28 to 152 (LRAMLKAEET…LLVNKLKWNL (125 aa)) constitute a Cyclin N-terminal domain. Positions 264–295 (QQSLDPKAAEEEEEEEEADLACTPTDVRDVNI) are disordered. Residue K270 forms a Glycyl lysine isopeptide (Lys-Gly) (interchain with G-Cter in ubiquitin) linkage. Residues 273–282 (EEEEEEEEAD) are compositionally biased toward acidic residues. Position 286 is a phosphothreonine (T286).

It belongs to the cyclin family. Cyclin D subfamily. In terms of assembly, interacts with either CDK4 or CDK6 protein kinase to form a serine/threonine kinase holoenzyme complex. The cyclin subunit imparts substrate specificity to the complex. Component of the ternary complex CCND1/CDK4/CDKN1B required for nuclear translocation and modulation of CDK4-mediated kinase activity. Interacts directly with CDKN1B. Can form similar complexes with either CDKN1A or CDKN2A. Interacts with UHRF2; the interaction ubiquitinates CCND1 and appears to occur independently of phosphorylation. Interacts with USP2. Interacts (via cyclin N-terminal domain) with INSM1 (via N-terminal region); the interaction competes with the binding of CCND1 to CDK4 during cell cycle progression and inhibits CDK4 activity. Interacts with CDK4; the interaction is prevented with the binding of CCND1 to INSM1 during cell cycle progression. Post-translationally, phosphorylation at Thr-286 by MAP kinases is required for ubiquitination and degradation by the DCX(AMBRA1) complex. It also plays an essential role for recognition by the FBXO31 component of SCF (SKP1-cullin-F-box) protein ligase complex following DNA damage. Ubiquitinated at Lys-270 by the DCX(AMBRA1) complex during the transition from G1 to S cell phase, leading to its degradation: ubiquitination is dependent on Thr-286 phosphorylation. The DCX(AMBRA1) complex represents the major regulator of CCND1 stability during the G1/S transition. Also ubiquitinated by the SCF(FBXO4) and Cul7-RING(FBXW8) ubiquitin-protein ligase complexes. Following DNA damage it is ubiquitinated by the SCF(FBXO31) protein ligase complex. SCF(FBXO31) ubiquitination is dependent on Thr-286 phosphorylation. Ubiquitinated also by UHRF2 apparently in a phosphorylation-independent manner. Ubiquitination leads to its degradation and G1 arrest. Deubiquitinated by USP2; leading to its stabilization.

The protein resides in the nucleus. It is found in the cytoplasm. The protein localises to the nucleus membrane. Functionally, regulatory component of the cyclin D1-CDK4 (DC) complex that phosphorylates and inhibits members of the retinoblastoma (RB) protein family including RB1 and regulates the cell-cycle during G(1)/S transition. Phosphorylation of RB1 allows dissociation of the transcription factor E2F from the RB/E2F complex and the subsequent transcription of E2F target genes which are responsible for the progression through the G(1) phase. Hypophosphorylates RB1 in early G(1) phase. Cyclin D-CDK4 complexes are major integrators of various mitogenenic and antimitogenic signals. Also a substrate for SMAD3, phosphorylating SMAD3 in a cell-cycle-dependent manner and repressing its transcriptional activity. Component of the ternary complex, cyclin D1/CDK4/CDKN1B, required for nuclear translocation and activity of the cyclin D-CDK4 complex. Exhibits transcriptional corepressor activity with INSM1 on the NEUROD1 and INS promoters in a cell cycle-independent manner. The polypeptide is G1/S-specific cyclin-D1 (CCND1) (Canis lupus familiaris (Dog)).